A 230-amino-acid chain; its full sequence is 7-cyano-7-deazaguanine synthase (230 aa).

14–24 (LSGGLDSTTTL) serves as a coordination point for ATP. Zn(2+) is bound by residues C194, C204, C207, and C210.

Belongs to the QueC family. It depends on Zn(2+) as a cofactor.

The enzyme catalyses 7-carboxy-7-deazaguanine + NH4(+) + ATP = 7-cyano-7-deazaguanine + ADP + phosphate + H2O + H(+). It participates in purine metabolism; 7-cyano-7-deazaguanine biosynthesis. In terms of biological role, catalyzes the ATP-dependent conversion of 7-carboxy-7-deazaguanine (CDG) to 7-cyano-7-deazaguanine (preQ(0)). This Vesicomyosocius okutanii subsp. Calyptogena okutanii (strain HA) protein is 7-cyano-7-deazaguanine synthase.